Here is a 336-residue protein sequence, read N- to C-terminus: MCNRQPKAVDLPPNYSCPHLLSFQSVEFNTNPTACDDVFCKRIESEKKYNDFLESLFKKYGRDTSDIADEVDLATGEIIVNNGHLEALKTKDDIWDPTFNNLEISASNGYEKKLDSSIGNPGEKAVSPVHIEDFQSPQIYKFKNLSLRDEMVSDCVFADEVPLASLFVENVCNETIPSQSCVRLKINDKTRKVDASALEKKSCLLPNSSGTLTDQRGLDTIKHKSIEQNEILHVISDTLSSPRRRNPLLSSPKTPLRRSFSKSKVRNSNSTKRRNFISLISMISPRPNLSTHHFNLGFQPLSQQTSFSGSSTQNPHSSSTCKKAFCFQCISESKKC.

The tract at residues 243–269 (RRRNPLLSSPKTPLRRSFSKSKVRNSN) is disordered. The span at 255–269 (PLRRSFSKSKVRNSN) shows a compositional bias: basic residues.

It is found in the cytoplasm. It localises to the nucleus. Functionally, centromeric protein that plays a central role in the incorporation and maintenance of histone H3-like variant CENPA at centromeres. The polypeptide is CENP-A histone chaperone scm3 (Schizosaccharomyces pombe (strain 972 / ATCC 24843) (Fission yeast)).